The chain runs to 752 residues: Catalase-peroxidase (752 aa).

A disordered region spans residues 1–20; the sequence is MENELVSKVKAPVPGNQTNT. The segment at residues 111–234 is a cross-link (tryptophyl-tyrosyl-methioninium (Trp-Tyr) (with M-260)); that stretch reads WHSAGTYRIG…LGAVQMGLIY (124 aa). The active-site Proton acceptor is H112. Residues 234 to 260 constitute a cross-link (tryptophyl-tyrosyl-methioninium (Tyr-Met) (with W-111)); it reads YVNPEGPNGKPDPAAAAVDIRETFARM. H275 is a heme b binding site.

This sequence belongs to the peroxidase family. Peroxidase/catalase subfamily. In terms of assembly, homodimer or homotetramer. The cofactor is heme b. In terms of processing, formation of the three residue Trp-Tyr-Met cross-link is important for the catalase, but not the peroxidase activity of the enzyme.

The catalysed reaction is H2O2 + AH2 = A + 2 H2O. The enzyme catalyses 2 H2O2 = O2 + 2 H2O. In terms of biological role, bifunctional enzyme with both catalase and broad-spectrum peroxidase activity. This is Catalase-peroxidase from Koribacter versatilis (strain Ellin345).